The sequence spans 239 residues: ATP-dependent dethiobiotin synthetase BioD (239 aa).

15-20 lines the ATP pocket; the sequence is EIGKTF. A Mg(2+)-binding site is contributed by Thr-19. Residue Lys-40 is part of the active site. ATP contacts are provided by residues Asp-57, 118 to 121, and 178 to 179; these read EGVG and NH. Mg(2+) is bound by residues Asp-57 and Glu-118.

Belongs to the dethiobiotin synthetase family. As to quaternary structure, homodimer. Requires Mg(2+) as cofactor.

Its subcellular location is the cytoplasm. The catalysed reaction is (7R,8S)-7,8-diammoniononanoate + CO2 + ATP = (4R,5S)-dethiobiotin + ADP + phosphate + 3 H(+). It participates in cofactor biosynthesis; biotin biosynthesis; biotin from 7,8-diaminononanoate: step 1/2. In terms of biological role, catalyzes a mechanistically unusual reaction, the ATP-dependent insertion of CO2 between the N7 and N8 nitrogen atoms of 7,8-diaminopelargonic acid (DAPA, also called 7,8-diammoniononanoate) to form a ureido ring. This Burkholderia cenocepacia (strain ATCC BAA-245 / DSM 16553 / LMG 16656 / NCTC 13227 / J2315 / CF5610) (Burkholderia cepacia (strain J2315)) protein is ATP-dependent dethiobiotin synthetase BioD.